Consider the following 156-residue polypeptide: Cytochrome c-type biogenesis protein CcmE 2 (156 aa).

Residues 1–8 are Cytoplasmic-facing; the sequence is MNPQRRRR. The chain crosses the membrane as a helical; Signal-anchor for type II membrane protein span at residues 9-29; that stretch reads LWWVLALLLAGGLATTLVSMA. Over 30–156 the chain is Periplasmic; sequence LQRNVAYLYT…AAANQGGALR (127 aa). Heme is bound by residues H123 and Y127. The interval 135–156 is disordered; the sequence is KMGSAHRKHDVPAAANQGGALR.

The protein belongs to the CcmE/CycJ family.

Its subcellular location is the cell inner membrane. Functionally, heme chaperone required for the biogenesis of c-type cytochromes. Transiently binds heme delivered by CcmC and transfers the heme to apo-cytochromes in a process facilitated by CcmF and CcmH. This is Cytochrome c-type biogenesis protein CcmE 2 from Xanthomonas oryzae pv. oryzae (strain MAFF 311018).